The chain runs to 586 residues: A-type ATP synthase subunit A (586 aa).

232–239 (GPFGSGKT) lines the ATP pocket.

It belongs to the ATPase alpha/beta chains family. Has multiple subunits with at least A(3), B(3), C, D, E, F, H, I and proteolipid K(x).

The protein resides in the cell membrane. The catalysed reaction is ATP + H2O + 4 H(+)(in) = ADP + phosphate + 5 H(+)(out). Component of the A-type ATP synthase that produces ATP from ADP in the presence of a proton gradient across the membrane. The A chain is the catalytic subunit. This is A-type ATP synthase subunit A from Methanococcus maripaludis (strain C7 / ATCC BAA-1331).